Here is a 377-residue protein sequence, read N- to C-terminus: Nitric oxide reductase FlRd-NAD(+) reductase (377 aa).

The protein belongs to the FAD-dependent oxidoreductase family. Requires FAD as cofactor.

It is found in the cytoplasm. It carries out the reaction 2 reduced [nitric oxide reductase rubredoxin domain] + NAD(+) + H(+) = 2 oxidized [nitric oxide reductase rubredoxin domain] + NADH. It functions in the pathway nitrogen metabolism; nitric oxide reduction. Its function is as follows. One of at least two accessory proteins for anaerobic nitric oxide (NO) reductase. Reduces the rubredoxin moiety of NO reductase. This chain is Nitric oxide reductase FlRd-NAD(+) reductase, found in Salmonella enteritidis PT4 (strain P125109).